We begin with the raw amino-acid sequence, 453 residues long: Ribosomal protein uS12 methylthiotransferase RimO (453 aa).

Positions 6–116 (PKVGFVSLGC…VMEAVHEALP (111 aa)) constitute an MTTase N-terminal domain. [4Fe-4S] cluster-binding residues include C15, C51, C80, C147, C151, and C154. Positions 133–370 (LTPRHYAYLK…MEKQAQISAA (238 aa)) constitute a Radical SAM core domain. The TRAM domain occupies 373 to 441 (EAKIGTVQQC…EHDLYGDALP (69 aa)).

It belongs to the methylthiotransferase family. RimO subfamily. The cofactor is [4Fe-4S] cluster.

The protein resides in the cytoplasm. It catalyses the reaction L-aspartate(89)-[ribosomal protein uS12]-hydrogen + (sulfur carrier)-SH + AH2 + 2 S-adenosyl-L-methionine = 3-methylsulfanyl-L-aspartate(89)-[ribosomal protein uS12]-hydrogen + (sulfur carrier)-H + 5'-deoxyadenosine + L-methionine + A + S-adenosyl-L-homocysteine + 2 H(+). In terms of biological role, catalyzes the methylthiolation of an aspartic acid residue of ribosomal protein uS12. The polypeptide is Ribosomal protein uS12 methylthiotransferase RimO (Stenotrophomonas maltophilia (strain K279a)).